A 268-amino-acid chain; its full sequence is Nickel import ATP-binding protein NikE (268 aa).

In terms of domain architecture, ABC transporter spans 4–252 (LNVSDLSHHY…SSDAGRVLQN (249 aa)). 45–52 (GRSGCGKS) lines the ATP pocket.

This sequence belongs to the ABC transporter superfamily. Nickel importer (TC 3.A.1.5.3) family. As to quaternary structure, the complex is composed of two ATP-binding proteins (NikD and NikE), two transmembrane proteins (NikB and NikC) and a solute-binding protein (NikA).

The protein localises to the cell inner membrane. It carries out the reaction Ni(2+)(out) + ATP + H2O = Ni(2+)(in) + ADP + phosphate + H(+). Its function is as follows. Part of the ABC transporter complex NikABCDE involved in nickel import. Responsible for energy coupling to the transport system. This Shigella dysenteriae serotype 1 (strain Sd197) protein is Nickel import ATP-binding protein NikE.